A 385-amino-acid chain; its full sequence is Methionine aminopeptidase 1 (385 aa).

Residues 6-59 (TRVCETAGCSSEAKLQCPTCLKLGIQGSYFCSQECFKGSWATHKLLHKKAKDEK) form a C6H2-type zinc finger. Residues cysteine 9, cysteine 14, cysteine 22, cysteine 25, cysteine 36, cysteine 40, histidine 48, and histidine 52 each contribute to the Zn(2+) site. A protein is bound at residue histidine 203. Residues aspartate 220, aspartate 231, and histidine 294 each coordinate Zn(2+). Position 301 (histidine 301) interacts with a protein. Positions 327 and 358 each coordinate Zn(2+).

It belongs to the peptidase M24A family. Methionine aminopeptidase type 1 subfamily. Associates with the 60S ribosomal subunit of the 80S translational complex. It depends on Zn(2+) as a cofactor. The cofactor is Co(2+). Requires Mn(2+) as cofactor. Fe(2+) serves as cofactor.

Its subcellular location is the cytoplasm. The enzyme catalyses Release of N-terminal amino acids, preferentially methionine, from peptides and arylamides.. Functionally, cotranslationally removes the N-terminal methionine from nascent proteins. The N-terminal methionine is often cleaved when the second residue in the primary sequence is small and uncharged (Met-Ala-, Cys, Gly, Pro, Ser, Thr, or Val). The chain is Methionine aminopeptidase 1 (METAP1) from Gallus gallus (Chicken).